A 52-amino-acid polypeptide reads, in one-letter code: Rubredoxin (52 aa).

The 52-residue stretch at 1 to 52 folds into the Rubredoxin-like domain; it reads MKKYVCTVCGYEYDPAEGDPDNGVKPGTSFDDLPADWVCPVCGAPKSEFEAA. Fe cation contacts are provided by Cys-6, Cys-9, Cys-39, and Cys-42.

This sequence belongs to the rubredoxin family. Fe(3+) is required as a cofactor.

The protein localises to the cytoplasm. Rubredoxin is a small nonheme, iron protein lacking acid-labile sulfide. Its single Fe, chelated to 4 Cys, functions as an electron acceptor and may also stabilize the conformation of the molecule. Its function is as follows. Electron acceptor for cytoplasmic lactate dehydrogenase. This chain is Rubredoxin (rub), found in Nitratidesulfovibrio vulgaris (strain ATCC 29579 / DSM 644 / CCUG 34227 / NCIMB 8303 / VKM B-1760 / Hildenborough) (Desulfovibrio vulgaris).